Here is a 337-residue protein sequence, read N- to C-terminus: GTP 3',8-cyclase (337 aa).

Positions 17 to 243 (PFQRQYYYLR…HKSHTDGPAK (227 aa)) constitute a Radical SAM core domain. Arginine 26 contributes to the GTP binding site. Residues cysteine 33 and cysteine 37 each coordinate [4Fe-4S] cluster. An S-adenosyl-L-methionine-binding site is contributed by tyrosine 39. Cysteine 40 is a [4Fe-4S] cluster binding site. Arginine 76 is a GTP binding site. Position 80 (glycine 80) interacts with S-adenosyl-L-methionine. Threonine 107 contacts GTP. Serine 131 serves as a coordination point for S-adenosyl-L-methionine. GTP is bound at residue lysine 168. Methionine 202 lines the S-adenosyl-L-methionine pocket. [4Fe-4S] cluster is bound by residues cysteine 265 and cysteine 268. 270 to 272 (RLR) provides a ligand contact to GTP. Cysteine 282 contributes to the [4Fe-4S] cluster binding site.

Belongs to the radical SAM superfamily. MoaA family. As to quaternary structure, monomer and homodimer. The cofactor is [4Fe-4S] cluster.

The enzyme catalyses GTP + AH2 + S-adenosyl-L-methionine = (8S)-3',8-cyclo-7,8-dihydroguanosine 5'-triphosphate + 5'-deoxyadenosine + L-methionine + A + H(+). Its pathway is cofactor biosynthesis; molybdopterin biosynthesis. In terms of biological role, catalyzes the cyclization of GTP to (8S)-3',8-cyclo-7,8-dihydroguanosine 5'-triphosphate. This Haemophilus influenzae (strain ATCC 51907 / DSM 11121 / KW20 / Rd) protein is GTP 3',8-cyclase.